We begin with the raw amino-acid sequence, 316 residues long: Putative ubiquitin-conjugating enzyme E2 39 (316 aa).

A UBC core domain is found at 57–217; it reads NWVKDIQKEW…VFVFSLKTMH (161 aa). Cys143 functions as the Glycyl thioester intermediate in the catalytic mechanism.

It belongs to the ubiquitin-conjugating enzyme family.

The catalysed reaction is S-ubiquitinyl-[E1 ubiquitin-activating enzyme]-L-cysteine + [E2 ubiquitin-conjugating enzyme]-L-cysteine = [E1 ubiquitin-activating enzyme]-L-cysteine + S-ubiquitinyl-[E2 ubiquitin-conjugating enzyme]-L-cysteine.. It functions in the pathway protein modification; protein ubiquitination. In terms of biological role, accepts the ubiquitin from the E1 complex and catalyzes its covalent attachment to other proteins. The protein is Putative ubiquitin-conjugating enzyme E2 39 (UBC39) of Arabidopsis thaliana (Mouse-ear cress).